The following is a 610-amino-acid chain: MDLEKLKNHQKYIRNFSIVAHIDHGKSTLADRILELTDTISKRDMQDQVLDDMDLERERGITIKLNAVELTYHAKDGHDYEFHLIDTPGHVDFSYEVSRSLAACEGAVLVVDAAQGVEAQTLANVYLALDDDLEIVPVINKIDLPAADPDKVKNEIEEVIGLDASDAVLASAKQGIGIPELLEQIVTKIPAPAGDLAAPLKALVFDSVYDDYRGVVLSIRLFEGTVKPGDKIRLMNSGSEYEVTEVGVNSPKPIARDYLIAGDVGYITASIKDITDTRVGDTVTSADQPADKALPGYREMSPMVYAGLYPTDNAKLNDLREALEKLQLNDAALEFEPESSQALGFGFRCGFLGMLHMDVIQERLEREFNLDLITTAPSVTYHAYLTDGTMKEVENPAEMPEASAIKRIEEPIVKATIMAPNDYVGAVMDLCQHRRGQFLTMEYLDDYRVNIIYNMPLSEIIFDFFDKLKSNTRGYASLDYEMNGYQGADLVKIDILLNGDKVDALSFIAHRTFAPARGREIASRLKKIIPRQNFEIPVQAAIGAKIIARTTIKAYRKDVTAHLYGGDRTRRMKLLEKQKAGKKRMKAVGKVDIPQEAFMAVLQTDEDETK.

One can recognise a tr-type G domain in the interval 11–193 (KYIRNFSIVA…QIVTKIPAPA (183 aa)). Residues 23 to 28 (DHGKST) and 140 to 143 (NKID) each bind GTP.

This sequence belongs to the TRAFAC class translation factor GTPase superfamily. Classic translation factor GTPase family. LepA subfamily.

The protein resides in the cell membrane. It catalyses the reaction GTP + H2O = GDP + phosphate + H(+). Its function is as follows. Required for accurate and efficient protein synthesis under certain stress conditions. May act as a fidelity factor of the translation reaction, by catalyzing a one-codon backward translocation of tRNAs on improperly translocated ribosomes. Back-translocation proceeds from a post-translocation (POST) complex to a pre-translocation (PRE) complex, thus giving elongation factor G a second chance to translocate the tRNAs correctly. Binds to ribosomes in a GTP-dependent manner. The protein is Elongation factor 4 of Levilactobacillus brevis (strain ATCC 367 / BCRC 12310 / CIP 105137 / JCM 1170 / LMG 11437 / NCIMB 947 / NCTC 947) (Lactobacillus brevis).